The sequence spans 332 residues: DGAT1/2-independent enzyme synthesizing storage lipids (332 aa).

Over 1-10 (MIGSNESSTE) the chain is Lumenal. Residue asparagine 5 is glycosylated (N-linked (GlcNAc...) asparagine). The chain crosses the membrane as a helical span at residues 11 to 31 (GPIPTSYLSFLAYLLGEWTGV). At 32-45 (EHTEDYLSYGAYLS) the chain is on the cytoplasmic side. The chain crosses the membrane as a helical span at residues 46-66 (WVLFPLAIVFILPVAIFFFCF). Residues 67 to 332 (NTSLLLLHIY…ERFQTRQKED (266 aa)) are Lumenal-facing. Histidine 132 is an active-site residue. Asparagine 289 carries an N-linked (GlcNAc...) asparagine glycan.

The protein belongs to the diacylglycerol acyltransferase family. Highly divergent.

The protein localises to the endoplasmic reticulum membrane. It carries out the reaction a 1,2-diacylglycerol + a 1,2-diacyl-sn-glycero-3-phosphocholine = a triacylglycerol + a 1-acyl-sn-glycero-3-phosphocholine. It catalyses the reaction a 1-O-alkyl-2-acyl-sn-glycero-3-phosphocholine + a 1,2-diacylglycerol = a 1-O-alkyl-sn-glycero-3-phosphocholine + a triacylglycerol. The enzyme catalyses a 2-acylglycerol + an acyl-CoA = a 1,2-diacylglycerol + CoA. The catalysed reaction is an acyl-CoA + a 1,2-diacyl-sn-glycerol = a triacyl-sn-glycerol + CoA. It carries out the reaction 2-(9Z-octadecenoyl)-glycerol + (9Z)-octadecenoyl-CoA = 1,2-di-(9Z-octadecenoyl)-glycerol + CoA. It catalyses the reaction 1,2-di-(9Z-octadecenoyl)-sn-glycerol + (9Z)-octadecenoyl-CoA = 1,2,3-tri-(9Z-octadecenoyl)-glycerol + CoA. Catalytic subunit of the alternative triglyceride biosynthesis pathway, which mediates formation of triacylglycerol from diacylglycerol and membrane phospholipids. Synthesizes triacylglycerol at the expense of membrane phospholipids, such as phosphatidylcholine (PC) and its ether-linked form (ePC), thereby altering the composition of membranes. The alternative triglyceride biosynthesis pathway is probably required to provide the energy required for rapid growth when fuel sources are limiting. It maintains mitochondrial function during periods of extracellular lipid starvation. Can also use acyl-CoA as donor: acts as a acyl-CoA:monoacylglycerol acyltransferase (MGAT), but also shows acyl-CoA:diacylglycerol acyltransferase (DGAT) activity. The sequence is that of DGAT1/2-independent enzyme synthesizing storage lipids (TMEM68) from Gallus gallus (Chicken).